Consider the following 423-residue polypeptide: Polyglutamylase complex subunit TTLL1 (423 aa).

Residues 1 to 367 (MAGRVKWVTD…NGEIPDCKWN (367 aa)) enclose the TTL domain. ATP-binding positions include K138, 144 to 145 (QG), 181 to 184 (SVYI), and 194 to 196 (KFD). Q144 lines the a protein pocket. R220 contributes to the L-glutamate binding site. An ATP-binding site is contributed by 241 to 242 (TN). Residue K259 participates in L-glutamate binding. Mg(2+)-binding residues include D313, E326, and N328. K344 contacts L-glutamate. The disordered stretch occupies residues 390–423 (DGAERELRNRPGQPVGPRAGRSRDSGRSVLTTWK).

The protein belongs to the tubulin polyglutamylase family. As to quaternary structure, part of the neuronal tubulin polyglutamylase complex which contains TPGS1, TPGS2, TTLL1, LRRC49 and NICN1. Interacts with PCM1, CSTPP1 and LRRC49. The cofactor is Mg(2+). In terms of tissue distribution, highly expressed in brain, heart and kidney. Expressed in liver, lung, muscle, spleen, testis and trachea. In the brain, expressed in ependymal cilia, cortex, corpus callosum and striatum. Expressed in blastomere.

The protein localises to the cytoplasm. The protein resides in the cytoskeleton. It is found in the cilium basal body. Its subcellular location is the cilium axoneme. It localises to the cell projection. The protein localises to the cilium. The protein resides in the flagellum. The catalysed reaction is (L-glutamyl)(n)-gamma-L-glutamyl-L-glutamyl-[protein] + L-glutamate + ATP = (L-glutamyl)(n+1)-gamma-L-glutamyl-L-glutamyl-[protein] + ADP + phosphate + H(+). Its function is as follows. Catalytic subunit of a polyglutamylase complex which modifies tubulin, generating side chains of glutamate on the gamma-carboxyl group of specific glutamate residues within the C-terminal tail of tubulin. Probably involved in the side-chain elongation step of the polyglutamylation reaction rather than the initiation step. Modifies both alpha- and beta-tubulins with a preference for the alpha-tail. Unlike most polyglutamylases of the tubulin--tyrosine ligase family, only displays a catalytic activity when in complex with other proteins as it is most likely lacking domains important for autonomous activity. Part of the neuronal tubulin polyglutamylase complex. Mediates cilia and flagella polyglutamylation which is essential for their biogenesis and motility. Involved in respiratory motile cilia function through the regulation of beating asymmetry. Essential for sperm flagella biogenesis, motility and male fertility. Also mediates glutamylation of non-tubulin proteins. Involved in KLF4 glutamylation which impedes its ubiquitination, thereby leading to somatic cell reprogramming, pluripotency maintenance and embryogenesis. The chain is Polyglutamylase complex subunit TTLL1 from Mus musculus (Mouse).